We begin with the raw amino-acid sequence, 539 residues long: Chaperonin GroEL (539 aa).

ATP-binding positions include 30 to 33 (TLGP), 87 to 91 (DGTTT), glycine 414, 479 to 481 (DAL), and aspartate 495.

The protein belongs to the chaperonin (HSP60) family. In terms of assembly, forms a cylinder of 14 subunits composed of two heptameric rings stacked back-to-back. Interacts with the co-chaperonin GroES.

The protein localises to the cytoplasm. It catalyses the reaction ATP + H2O + a folded polypeptide = ADP + phosphate + an unfolded polypeptide.. Together with its co-chaperonin GroES, plays an essential role in assisting protein folding. The GroEL-GroES system forms a nano-cage that allows encapsulation of the non-native substrate proteins and provides a physical environment optimized to promote and accelerate protein folding. The polypeptide is Chaperonin GroEL (Caldicellulosiruptor bescii (strain ATCC BAA-1888 / DSM 6725 / KCTC 15123 / Z-1320) (Anaerocellum thermophilum)).